A 301-amino-acid chain; its full sequence is tRNA pseudouridine synthase B (301 aa).

Residue aspartate 47 is the Nucleophile of the active site.

It belongs to the pseudouridine synthase TruB family. Type 1 subfamily.

The enzyme catalyses uridine(55) in tRNA = pseudouridine(55) in tRNA. In terms of biological role, responsible for synthesis of pseudouridine from uracil-55 in the psi GC loop of transfer RNAs. This is tRNA pseudouridine synthase B from Cereibacter sphaeroides (strain ATCC 17023 / DSM 158 / JCM 6121 / CCUG 31486 / LMG 2827 / NBRC 12203 / NCIMB 8253 / ATH 2.4.1.) (Rhodobacter sphaeroides).